We begin with the raw amino-acid sequence, 199 residues long: NADH-quinone oxidoreductase subunit C (199 aa).

This sequence belongs to the complex I 30 kDa subunit family. As to quaternary structure, NDH-1 is composed of 14 different subunits. Subunits NuoB, C, D, E, F, and G constitute the peripheral sector of the complex.

It localises to the cell inner membrane. The enzyme catalyses a quinone + NADH + 5 H(+)(in) = a quinol + NAD(+) + 4 H(+)(out). NDH-1 shuttles electrons from NADH, via FMN and iron-sulfur (Fe-S) centers, to quinones in the respiratory chain. The immediate electron acceptor for the enzyme in this species is believed to be ubiquinone. Couples the redox reaction to proton translocation (for every two electrons transferred, four hydrogen ions are translocated across the cytoplasmic membrane), and thus conserves the redox energy in a proton gradient. This chain is NADH-quinone oxidoreductase subunit C, found in Paramagnetospirillum magneticum (strain ATCC 700264 / AMB-1) (Magnetospirillum magneticum).